A 444-amino-acid polypeptide reads, in one-letter code: Beta-D-glucosyl crocetin beta-1,6-glucosyltransferase (444 aa).

The Proton acceptor role is filled by His9. His9 serves as a coordination point for an anthocyanidin. Asp108 serves as the catalytic Charge relay. Positions 130, 319, 321, 336, 339, 340, 341, 344, 360, and 361 each coordinate UDP-alpha-D-glucose.

The protein belongs to the UDP-glycosyltransferase family. Ubiquitous.

The enzyme catalyses beta-D-glucosyl crocetin + UDP-alpha-D-glucose = beta-D-gentiobiosyl crocetin + UDP + H(+). It carries out the reaction bis(beta-D-glucosyl) crocetin + UDP-alpha-D-glucose = beta-D-gentiobiosyl beta-D-glucosyl crocetin + UDP + H(+). The catalysed reaction is beta-D-gentiobiosyl beta-D-glucosyl crocetin + UDP-alpha-D-glucose = bis(beta-D-gentiobiosyl) crocetin + UDP + H(+). Its function is as follows. Glucosyltransferase catalyzing the beta 1-6 glucosylation of the sugar moiety of crocetin glucosyl esters to produce crocetin gentiobiosyl esters. Weak activity toward curcumin glucosides, but no activity with flavonoid glucosides, coumarin glucosides, 4-nitrophenyl glucoside or crocetin. Involved with UGT75L6 in sequential glycosylation of crocetin to crocin (bis(beta-D-gentiobiosyl) crocetin). This Gardenia jasminoides (Cape jasmine) protein is Beta-D-glucosyl crocetin beta-1,6-glucosyltransferase (UGT94E5).